We begin with the raw amino-acid sequence, 504 residues long: Maturase K (504 aa).

It belongs to the intron maturase 2 family. MatK subfamily.

The protein localises to the plastid. Its subcellular location is the chloroplast. Its function is as follows. Usually encoded in the trnK tRNA gene intron. Probably assists in splicing its own and other chloroplast group II introns. This chain is Maturase K, found in Calyptranthes pallens (Spicewood).